The following is a 37-amino-acid chain: Large ribosomal subunit protein bL36c (37 aa).

It belongs to the bacterial ribosomal protein bL36 family.

The protein localises to the plastid. Its subcellular location is the chloroplast. The sequence is that of Large ribosomal subunit protein bL36c from Populus alba (White poplar).